The primary structure comprises 76 residues: cAMP-dependent protein kinase inhibitor alpha (76 aa).

Threonine 2 carries the post-translational modification N-acetylthreonine. Residues 49-76 (KTEGEEDAQRNSTEQSGEAQGEAAKSES) are disordered.

It belongs to the PKI family.

Its function is as follows. Extremely potent competitive inhibitor of cAMP-dependent protein kinase activity, this protein interacts with the catalytic subunit of the enzyme after the cAMP-induced dissociation of its regulatory chains. The sequence is that of cAMP-dependent protein kinase inhibitor alpha (PKIA) from Bos taurus (Bovine).